The primary structure comprises 324 residues: Lipoyl synthase, chloroplastic (324 aa).

Low complexity-rich tracts occupy residues 1 to 12 (MCGPTATTVANA) and 20 to 29 (KGLPPGLKKP). The tract at residues 1-30 (MCGPTATTVANAGTGGETIKGLPPGLKKPP) is disordered. 7 residues coordinate [4Fe-4S] cluster: Cys58, Cys63, Cys69, Cys86, Cys90, Cys93, and Ser302. The Radical SAM core domain maps to 72 to 291 (GDTGTATVML…AYGEEVIGFR (220 aa)).

Belongs to the radical SAM superfamily. Lipoyl synthase family. Requires [4Fe-4S] cluster as cofactor.

The protein resides in the plastid. It localises to the chloroplast. It carries out the reaction [[Fe-S] cluster scaffold protein carrying a second [4Fe-4S](2+) cluster] + N(6)-octanoyl-L-lysyl-[protein] + 2 oxidized [2Fe-2S]-[ferredoxin] + 2 S-adenosyl-L-methionine + 4 H(+) = [[Fe-S] cluster scaffold protein] + N(6)-[(R)-dihydrolipoyl]-L-lysyl-[protein] + 4 Fe(3+) + 2 hydrogen sulfide + 2 5'-deoxyadenosine + 2 L-methionine + 2 reduced [2Fe-2S]-[ferredoxin]. It participates in protein modification; protein lipoylation via endogenous pathway; protein N(6)-(lipoyl)lysine from octanoyl-[acyl-carrier-protein]: step 2/2. Its function is as follows. Catalyzes the radical-mediated insertion of two sulfur atoms into the C-6 and C-8 positions of the octanoyl moiety bound to the lipoyl domains of lipoate-dependent enzymes, thereby converting the octanoylated domains into lipoylated derivatives. In Ostreococcus lucimarinus (strain CCE9901), this protein is Lipoyl synthase, chloroplastic.